We begin with the raw amino-acid sequence, 31 residues long: Cytochrome b6-f complex subunit 6 (31 aa).

Residues 4 to 24 (LTSYFGFLLAALTITSVLFIG) traverse the membrane as a helical segment.

The protein belongs to the PetL family. As to quaternary structure, the 4 large subunits of the cytochrome b6-f complex are cytochrome b6, subunit IV (17 kDa polypeptide, PetD), cytochrome f and the Rieske protein, while the 4 small subunits are PetG, PetL, PetM and PetN. The complex functions as a dimer.

Its subcellular location is the plastid. The protein localises to the chloroplast thylakoid membrane. In terms of biological role, component of the cytochrome b6-f complex, which mediates electron transfer between photosystem II (PSII) and photosystem I (PSI), cyclic electron flow around PSI, and state transitions. PetL is important for photoautotrophic growth as well as for electron transfer efficiency and stability of the cytochrome b6-f complex. This Silene conica (Striped corn catchfly) protein is Cytochrome b6-f complex subunit 6.